The primary structure comprises 460 residues: UDP-glycosyltransferase 74B1 (460 aa).

H22 serves as the catalytic Proton acceptor. H22 contacts an anthocyanidin. Residue D113 is the Charge relay of the active site. Residues T135, Q339, H354, W357, N358, S359, E362, D378, and Q379 each contribute to the UDP-alpha-D-glucose site.

The protein belongs to the UDP-glycosyltransferase family. As to expression, expressed in the vasculature, the apical meristems of roots, shoots and inflorescence, and the junction of organ or branches.

The enzyme catalyses (Z)-2-phenyl-1-thioacetohydroximate + UDP-alpha-D-glucose = (Z)-desulfoglucotropeolin + UDP. The catalysed reaction is a (Z)-omega-(methylsulfanyl)alkyl-thiohydroximate + UDP-alpha-D-glucose = an aliphatic (Z)-desulfo-glucosinolate + UDP. It catalyses the reaction (Z)-2-(indol-3-yl)-1-thioacetohydroximate + UDP-alpha-D-glucose = (Z)-indolylmethyl desulfoglucosinolate + UDP. In terms of biological role, involved in the biosynthesis of glucosinolate. In in vitro assay, may use phenylacetothiohydroximate (PATH), but not phenylacetic acid (PAA), indole-3-acetic acid (IAA) or salicylic acid (SA) as substrate. Specific for the thiohydroximate functional group and does not glucosylate the carboxylate group or a hydroxyl group. This is UDP-glycosyltransferase 74B1 (UGT74B1) from Arabidopsis thaliana (Mouse-ear cress).